The following is a 396-amino-acid chain: Tryptophan synthase beta chain (396 aa).

Lys86 carries the post-translational modification N6-(pyridoxal phosphate)lysine.

It belongs to the TrpB family. As to quaternary structure, tetramer of two alpha and two beta chains. Requires pyridoxal 5'-phosphate as cofactor.

The enzyme catalyses (1S,2R)-1-C-(indol-3-yl)glycerol 3-phosphate + L-serine = D-glyceraldehyde 3-phosphate + L-tryptophan + H2O. Its pathway is amino-acid biosynthesis; L-tryptophan biosynthesis; L-tryptophan from chorismate: step 5/5. The beta subunit is responsible for the synthesis of L-tryptophan from indole and L-serine. The polypeptide is Tryptophan synthase beta chain (Sodalis glossinidius (strain morsitans)).